The chain runs to 250 residues: uncharacterized protein (250 aa).

NAD(+) is bound by residues Ser-15, Leu-17, Asp-36, Asp-56, Val-57, and Cys-82. Position 143 (Ser-143) interacts with substrate. Tyr-156, Lys-160, Phe-189, and Thr-191 together coordinate NAD(+). The Proton acceptor role is filled by Tyr-156.

Belongs to the short-chain dehydrogenases/reductases (SDR) family.

This is an uncharacterized protein from Mycobacterium tuberculosis (strain CDC 1551 / Oshkosh).